The sequence spans 62 residues: Sperm protamine P1 (62 aa).

The segment at 1-62 is disordered; the sequence is MARYRRHSRS…RRYSRRRRRY (62 aa).

This sequence belongs to the protamine P1 family. In terms of tissue distribution, testis.

The protein resides in the nucleus. It is found in the chromosome. Its function is as follows. Protamines substitute for histones in the chromatin of sperm during the haploid phase of spermatogenesis. They compact sperm DNA into a highly condensed, stable and inactive complex. The chain is Sperm protamine P1 (PRM1) from Sminthopsis longicaudata (Long-tailed dunnart).